We begin with the raw amino-acid sequence, 291 residues long: Ribose-phosphate pyrophosphokinase (291 aa).

ATP contacts are provided by residues Asp34–Glu36 and Arg93–Gln94. 2 residues coordinate Mg(2+): His127 and Asp165. The active site involves Lys188. Residues Arg190, Asp216, and Ser220–Thr224 each bind D-ribose 5-phosphate.

Belongs to the ribose-phosphate pyrophosphokinase family. Class III (archaeal) subfamily. As to quaternary structure, homodimer. Requires Mg(2+) as cofactor.

It is found in the cytoplasm. The catalysed reaction is D-ribose 5-phosphate + ATP = 5-phospho-alpha-D-ribose 1-diphosphate + AMP + H(+). The protein operates within metabolic intermediate biosynthesis; 5-phospho-alpha-D-ribose 1-diphosphate biosynthesis; 5-phospho-alpha-D-ribose 1-diphosphate from D-ribose 5-phosphate (route I): step 1/1. Its function is as follows. Involved in the biosynthesis of the central metabolite phospho-alpha-D-ribosyl-1-pyrophosphate (PRPP) via the transfer of pyrophosphoryl group from ATP to 1-hydroxyl of ribose-5-phosphate (Rib-5-P). In Saccharolobus solfataricus (strain ATCC 35092 / DSM 1617 / JCM 11322 / P2) (Sulfolobus solfataricus), this protein is Ribose-phosphate pyrophosphokinase.